Reading from the N-terminus, the 256-residue chain is MSVRLSYGASLASIPRCFDLKSSKITVMGDDHSGKTSLVRSWLGSSFQISDANRYRVSDLYHKTIQFDTLVKYYRTFGVKGQLPNYAGFKAKNSGTIYESCGNFLEERLINANKSTAQRRTSIDVQVFDTNQMEVSYLSELTTLQIRQSDAIILCFDSTNDSSLASLESYICIIHHVRLECELDIPIIIACTKCDLDSERTITHEKVLTFIQELGFSPGNLDYFETSSKFNVNVEDLFLAVLLKIEKSKSDRRKLL.

Residue 29–36 participates in ATP binding; the sequence is GDDHSGKT.

This is an uncharacterized protein from Saccharomyces cerevisiae (strain ATCC 204508 / S288c) (Baker's yeast).